We begin with the raw amino-acid sequence, 120 residues long: Large ribosomal subunit protein uL18 (120 aa).

The protein belongs to the universal ribosomal protein uL18 family. Part of the 50S ribosomal subunit; part of the 5S rRNA/L5/L18/L25 subcomplex. Contacts the 5S and 23S rRNAs.

Functionally, this is one of the proteins that bind and probably mediate the attachment of the 5S RNA into the large ribosomal subunit, where it forms part of the central protuberance. This is Large ribosomal subunit protein uL18 from Afipia carboxidovorans (strain ATCC 49405 / DSM 1227 / KCTC 32145 / OM5) (Oligotropha carboxidovorans).